The primary structure comprises 27 residues: Cationic protein C1 (27 aa).

It localises to the secreted. Its subcellular location is the nematocyst. This chain is Cationic protein C1, found in Bunodosoma caissarum (Sea anemone).